A 158-amino-acid chain; its full sequence is Cyclic pyranopterin monophosphate synthase (158 aa).

Substrate-binding positions include 76–78 and 114–115; these read MCH and ME. Residue Asp-129 is part of the active site.

Belongs to the MoaC family. In terms of assembly, homohexamer; trimer of dimers.

It catalyses the reaction (8S)-3',8-cyclo-7,8-dihydroguanosine 5'-triphosphate = cyclic pyranopterin phosphate + diphosphate. It functions in the pathway cofactor biosynthesis; molybdopterin biosynthesis. Its function is as follows. Catalyzes the conversion of (8S)-3',8-cyclo-7,8-dihydroguanosine 5'-triphosphate to cyclic pyranopterin monophosphate (cPMP). This chain is Cyclic pyranopterin monophosphate synthase, found in Clostridium perfringens (strain 13 / Type A).